A 322-amino-acid chain; its full sequence is Replication factor C small subunit (322 aa).

Residue glycine 46–threonine 53 participates in ATP binding.

It belongs to the activator 1 small subunits family. RfcS subfamily. In terms of assembly, heteromultimer composed of small subunits (RfcS) and large subunits (RfcL).

Functionally, part of the RFC clamp loader complex which loads the PCNA sliding clamp onto DNA. The polypeptide is Replication factor C small subunit (Methanoregula boonei (strain DSM 21154 / JCM 14090 / 6A8)).